The chain runs to 538 residues: Phosphoenolpyruvate carboxykinase (ATP) (538 aa).

Residue arginine 64 coordinates substrate. Arginine 152 serves as a coordination point for ATP. Residues tyrosine 205 and lysine 211 each coordinate substrate. ATP is bound by residues lysine 211, histidine 230, and 246–254 (GLSGTGKTT). Residues lysine 211 and histidine 230 each coordinate Mn(2+). Residue aspartate 267 participates in Mn(2+) binding. ATP is bound by residues glutamate 295, arginine 331, arginine 344, 447 to 448 (RI), and threonine 453. Arginine 331 provides a ligand contact to substrate.

The protein belongs to the phosphoenolpyruvate carboxykinase (ATP) family. As to quaternary structure, monomer. It depends on Mn(2+) as a cofactor.

It localises to the cytoplasm. The catalysed reaction is oxaloacetate + ATP = phosphoenolpyruvate + ADP + CO2. The protein operates within carbohydrate biosynthesis; gluconeogenesis. In terms of biological role, involved in gluconeogenesis. Catalyzes the conversion of oxaloacetate (OAA) to phosphoenolpyruvate (PEP) through direct phosphoryl transfer between the nucleoside triphosphate and OAA. The chain is Phosphoenolpyruvate carboxykinase (ATP) from Actinobacillus succinogenes (strain ATCC 55618 / DSM 22257 / CCUG 43843 / 130Z).